The chain runs to 388 residues: NADH-quinone oxidoreductase subunit D 2 (388 aa).

The protein belongs to the complex I 49 kDa subunit family. NDH-1 is composed of 14 different subunits. Subunits NuoB, C, D, E, F, and G constitute the peripheral sector of the complex.

It localises to the cell membrane. It carries out the reaction a quinone + NADH + 5 H(+)(in) = a quinol + NAD(+) + 4 H(+)(out). Functionally, NDH-1 shuttles electrons from NADH, via FMN and iron-sulfur (Fe-S) centers, to quinones in the respiratory chain. The immediate electron acceptor for the enzyme in this species is believed to be a menaquinone. Couples the redox reaction to proton translocation (for every two electrons transferred, four hydrogen ions are translocated across the cytoplasmic membrane), and thus conserves the redox energy in a proton gradient. This is NADH-quinone oxidoreductase subunit D 2 from Salinispora tropica (strain ATCC BAA-916 / DSM 44818 / JCM 13857 / NBRC 105044 / CNB-440).